The chain runs to 572 residues: Methionine--tRNA ligase (572 aa).

The short motif at 11-21 is the 'HIGH' region element; that stretch reads PYINGIKHLGN. Zn(2+)-binding residues include C143, C146, C156, and C159. Residues 346–350 carry the 'KMSKS' region motif; that stretch reads QFSTS. Residue T349 participates in ATP binding.

It belongs to the class-I aminoacyl-tRNA synthetase family. MetG type 1 subfamily. In terms of assembly, monomer. Zn(2+) serves as cofactor.

It is found in the cytoplasm. It carries out the reaction tRNA(Met) + L-methionine + ATP = L-methionyl-tRNA(Met) + AMP + diphosphate. Functionally, is required not only for elongation of protein synthesis but also for the initiation of all mRNA translation through initiator tRNA(fMet) aminoacylation. This is Methionine--tRNA ligase from Cereibacter sphaeroides (strain ATCC 17029 / ATH 2.4.9) (Rhodobacter sphaeroides).